A 337-amino-acid chain; its full sequence is Phosphoenolpyruvate transferase (337 aa).

Asp-69 contributes to the 7,8-didemethyl-8-hydroxy-5-deazariboflavin binding site.

Belongs to the CofD family. As to quaternary structure, homodimer. Mg(2+) is required as a cofactor.

The catalysed reaction is enolpyruvoyl-2-diphospho-5'-guanosine + 7,8-didemethyl-8-hydroxy-5-deazariboflavin = dehydro coenzyme F420-0 + GMP + H(+). The protein operates within cofactor biosynthesis; coenzyme F420 biosynthesis. In terms of biological role, catalyzes the transfer of the phosphoenolpyruvate moiety from enoylpyruvoyl-2-diphospho-5'-guanosine (EPPG) to 7,8-didemethyl-8-hydroxy-5-deazariboflavin (FO) with the formation of dehydro coenzyme F420-0 and GMP. This Mycobacterium avium (strain 104) protein is Phosphoenolpyruvate transferase.